The sequence spans 144 residues: Giant hemoglobin AIII chain (144 aa).

The 143-residue stretch at Glu-2 to Asn-144 folds into the Globin domain. A heme b-binding site is contributed by His-95.

Belongs to the globin family. In terms of assembly, giant hemoglobin is composed of four heme-containing chains (AI to AIV), and two linker chains (AV and AVI).

The protein is Giant hemoglobin AIII chain of Lamellibrachia sp. (Deep-sea giant tube worm).